Here is a 467-residue protein sequence, read N- to C-terminus: Probable glutamate decarboxylase gamma (467 aa).

N6-(pyridoxal phosphate)lysine is present on Lys-278.

This sequence belongs to the group II decarboxylase family. Requires pyridoxal 5'-phosphate as cofactor.

The enzyme catalyses L-glutamate + H(+) = 4-aminobutanoate + CO2. The chain is Probable glutamate decarboxylase gamma from Listeria innocua serovar 6a (strain ATCC BAA-680 / CLIP 11262).